Reading from the N-terminus, the 449-residue chain is Flavonol 7-O-beta-glucosyltransferase UGT74F1 (449 aa).

Catalysis depends on histidine 18, which acts as the Proton acceptor. Histidine 18 provides a ligand contact to an anthocyanidin. Aspartate 111 functions as the Charge relay in the catalytic mechanism. Residues threonine 133, glutamine 327, histidine 342, tryptophan 345, asparagine 346, serine 347, glutamate 350, aspartate 366, and glutamine 367 each contribute to the UDP-alpha-D-glucose site.

It belongs to the UDP-glycosyltransferase family.

The enzyme catalyses a 7-O-hydroxy-flavonol + UDP-alpha-D-glucose = a flavonol 7-O-beta-D-glucoside + UDP + H(+). Possesses quercetin 7-O-glucosyltransferase and 4'-O-glucosyltransferase activities in vitro. Also active in vitro on benzoates and benzoate derivatives. Has low affinity for the tryptophan precursor anthranilate. Catalyzes the formation of anthranilate glucose ester. Is a minor source of this activity in the plant. In Arabidopsis thaliana (Mouse-ear cress), this protein is Flavonol 7-O-beta-glucosyltransferase UGT74F1.